Consider the following 338-residue polypeptide: Tetraacyldisaccharide 4'-kinase (338 aa).

Position 51 to 58 (51 to 58 (HLGGAGKT)) interacts with ATP.

The protein belongs to the LpxK family.

It catalyses the reaction a lipid A disaccharide + ATP = a lipid IVA + ADP + H(+). Its pathway is glycolipid biosynthesis; lipid IV(A) biosynthesis; lipid IV(A) from (3R)-3-hydroxytetradecanoyl-[acyl-carrier-protein] and UDP-N-acetyl-alpha-D-glucosamine: step 6/6. Its function is as follows. Transfers the gamma-phosphate of ATP to the 4'-position of a tetraacyldisaccharide 1-phosphate intermediate (termed DS-1-P) to form tetraacyldisaccharide 1,4'-bis-phosphate (lipid IVA). In Rhodopseudomonas palustris (strain HaA2), this protein is Tetraacyldisaccharide 4'-kinase.